The chain runs to 299 residues: Transcription elongation factor A protein 2 (299 aa).

In terms of domain architecture, TFIIS N-terminal spans 5 to 82; that stretch reads EEIARIARRL…KSWKKLLDVS (78 aa). K57 participates in a covalent cross-link: Glycyl lysine isopeptide (Lys-Gly) (interchain with G-Cter in ubiquitin). A phosphoserine mark is found at S59 and S100. Positions 82-127 are disordered; that stretch reads SDGKSRNQGRGTPLPTSSSKDASRTTDLSCKKPDPPRTPSTPRITT. Positions 87 to 101 are enriched in polar residues; it reads RNQGRGTPLPTSSSK. The span at 102 to 116 shows a compositional bias: basic and acidic residues; sequence DASRTTDLSCKKPDP. A TFIIS central domain is found at 138 to 254; that stretch reads VRNKCREMLT…EHQMARTGGT (117 aa). The segment at 257–297 adopts a TFIIS-type zinc-finger fold; that stretch reads DLFTCNKCRKKNCTYTQVQTRSSDEPMTTYVVCNECGNRWK. C261, C264, C289, and C292 together coordinate Zn(2+).

This sequence belongs to the TFS-II family. As to quaternary structure, interacts with the basal transcription factor GTF2B. Interacts with REXO1. As to expression, testis and ovary specific. Specific to testicular germ cells.

The protein resides in the nucleus. Its function is as follows. Necessary for efficient RNA polymerase II transcription elongation past template-encoded arresting sites. The arresting sites in DNA have the property of trapping a certain fraction of elongating RNA polymerases that pass through, resulting in locked ternary complexes. Cleavage of the nascent transcript by S-II allows the resumption of elongation from the new 3'-terminus. This Mus musculus (Mouse) protein is Transcription elongation factor A protein 2 (Tcea2).